Here is a 330-residue protein sequence, read N- to C-terminus: Phospholipase C (330 aa).

The signal sequence occupies residues 1–34; sequence MVKKTKSNSLKKVATLALANLLLVGALTDNSAKA. Cysteines 155 and 191 form a disulfide.

This sequence belongs to the neutral sphingomyelinase family. In terms of assembly, monomer.

It localises to the secreted. It catalyses the reaction a 1,2-diacyl-sn-glycero-3-phosphocholine + H2O = phosphocholine + a 1,2-diacyl-sn-glycerol + H(+). Its function is as follows. Bacterial hemolysins are exotoxins that attack blood cell membranes and cause cell rupture. Beta-hemolysin is a phospholipase C with specific activity toward sphingomyelins. Has a high specificity for sphingomyelin, hydrolyzes lysophosphatidylcholine at a much lower rate, but has no activity towards phosphatidylcholine, phosphatidylethanolamine, or phosphatidylserine. In Staphylococcus aureus (strain NCTC 8325 / PS 47), this protein is Phospholipase C (hlb).